Reading from the N-terminus, the 309-residue chain is Aspartate carbamoyltransferase catalytic subunit (309 aa).

R49 and T50 together coordinate carbamoyl phosphate. K77 contacts L-aspartate. The carbamoyl phosphate site is built by R99, H127, and Q130. The L-aspartate site is built by R160 and R211. Carbamoyl phosphate-binding residues include A252 and P253.

Belongs to the aspartate/ornithine carbamoyltransferase superfamily. ATCase family. As to quaternary structure, heterododecamer (2C3:3R2) of six catalytic PyrB chains organized as two trimers (C3), and six regulatory PyrI chains organized as three dimers (R2).

The enzyme catalyses carbamoyl phosphate + L-aspartate = N-carbamoyl-L-aspartate + phosphate + H(+). The protein operates within pyrimidine metabolism; UMP biosynthesis via de novo pathway; (S)-dihydroorotate from bicarbonate: step 2/3. Functionally, catalyzes the condensation of carbamoyl phosphate and aspartate to form carbamoyl aspartate and inorganic phosphate, the committed step in the de novo pyrimidine nucleotide biosynthesis pathway. In Geobacillus sp. (strain WCH70), this protein is Aspartate carbamoyltransferase catalytic subunit.